The following is a 320-amino-acid chain: Tyrosine phosphatase H3 (320 aa).

Residues 22–309 enclose the Tyrosine-protein phosphatase domain; it reads NFWEFVRLEH…AFCYKAVRYA (288 aa). The Phosphocysteine intermediate role is filled by C250.

The protein belongs to the protein-tyrosine phosphatase family.

It carries out the reaction O-phospho-L-tyrosyl-[protein] + H2O = L-tyrosyl-[protein] + phosphate. Suppresses host immune cell adhesion and phagocytosis. The protein is Tyrosine phosphatase H3 (H3) of Microplitis demolitor (Parasitoid wasp).